A 188-amino-acid polypeptide reads, in one-letter code: MSRALDKAGRWIGWAFFADLANGLALTFGYMFSRPVTMQYPDKEKWLPYSRYRGHHFLKRDDEGEIKCVACELCARICPCDCIEVVPYEDEKGNRRPAKFEIDTARCLFCGLCEDACPADAIALGQQYEFSSFSSRDLVIGRDDLLAKPGKAMTGGGVVAARLNTERDVLVEASEPRGYNWWRNIRRK.

4Fe-4S ferredoxin-type domains are found at residues 56–88 (HFLK…VVPY) and 98–127 (AKFE…LGQQ). The [4Fe-4S] cluster site is built by Cys-68, Cys-71, Cys-74, Cys-78, Cys-107, Cys-110, Cys-113, and Cys-117.

The protein belongs to the complex I 23 kDa subunit family. In terms of assembly, NDH-1 is composed of 14 different subunits. Subunits NuoA, H, J, K, L, M, N constitute the membrane sector of the complex. [4Fe-4S] cluster serves as cofactor.

It is found in the cell inner membrane. The catalysed reaction is a quinone + NADH + 5 H(+)(in) = a quinol + NAD(+) + 4 H(+)(out). Functionally, NDH-1 shuttles electrons from NADH, via FMN and iron-sulfur (Fe-S) centers, to quinones in the respiratory chain. The immediate electron acceptor for the enzyme in this species is believed to be ubiquinone. Couples the redox reaction to proton translocation (for every two electrons transferred, four hydrogen ions are translocated across the cytoplasmic membrane), and thus conserves the redox energy in a proton gradient. The protein is NADH-quinone oxidoreductase subunit I 2 of Rhizobium meliloti (strain 1021) (Ensifer meliloti).